The following is a 67-amino-acid chain: Conotoxin LeDr192 (67 aa).

The signal sequence occupies residues methionine 1–cysteine 19. A propeptide spanning residues phenylalanine 20–isoleucine 49 is cleaved from the precursor. Position 65 is a threonine amide (threonine 65).

Belongs to the conotoxin T superfamily. In terms of processing, contains 2 disulfide bonds that can be either 'C1-C3, C2-C4' or 'C1-C4, C2-C3', since these disulfide connectivities have been observed for conotoxins with cysteine framework V (for examples, see AC P0DQQ7 and AC P81755). As to expression, expressed by the venom duct.

It is found in the secreted. This is Conotoxin LeDr192 from Conus litteratus (Lettered cone).